Here is a 373-residue protein sequence, read N- to C-terminus: Spore coat polysaccharide biosynthesis protein SpsE (373 aa).

In terms of domain architecture, AFP-like spans Gly305–Lys367.

Its pathway is spore coat biogenesis; spore coat polysaccharide biosynthesis. The chain is Spore coat polysaccharide biosynthesis protein SpsE (spsE) from Bacillus subtilis (strain 168).